Reading from the N-terminus, the 642-residue chain is Threonine--tRNA ligase (642 aa).

The interval 239 to 530 (DHRKLGKELN…LTEHYAGAFP (292 aa)) is catalytic. Zn(2+)-binding residues include cysteine 331, histidine 382, and histidine 507.

Belongs to the class-II aminoacyl-tRNA synthetase family. As to quaternary structure, homodimer. Zn(2+) is required as a cofactor.

It is found in the cytoplasm. It carries out the reaction tRNA(Thr) + L-threonine + ATP = L-threonyl-tRNA(Thr) + AMP + diphosphate + H(+). Functionally, catalyzes the attachment of threonine to tRNA(Thr) in a two-step reaction: L-threonine is first activated by ATP to form Thr-AMP and then transferred to the acceptor end of tRNA(Thr). Also edits incorrectly charged L-seryl-tRNA(Thr). This chain is Threonine--tRNA ligase, found in Lawsonia intracellularis (strain PHE/MN1-00).